A 133-amino-acid chain; its full sequence is 6,7-dimethyl-8-ribityllumazine synthase (133 aa).

5-amino-6-(D-ribitylamino)uracil contacts are provided by residues F11, A43–D45, and A67–V69. Position 72 to 73 (D72 to T73) interacts with (2S)-2-hydroxy-3-oxobutyl phosphate. Catalysis depends on H75, which acts as the Proton donor. F100 provides a ligand contact to 5-amino-6-(D-ribitylamino)uracil. A (2S)-2-hydroxy-3-oxobutyl phosphate-binding site is contributed by R115.

Belongs to the DMRL synthase family.

The catalysed reaction is (2S)-2-hydroxy-3-oxobutyl phosphate + 5-amino-6-(D-ribitylamino)uracil = 6,7-dimethyl-8-(1-D-ribityl)lumazine + phosphate + 2 H2O + H(+). It participates in cofactor biosynthesis; riboflavin biosynthesis; riboflavin from 2-hydroxy-3-oxobutyl phosphate and 5-amino-6-(D-ribitylamino)uracil: step 1/2. Its function is as follows. Catalyzes the formation of 6,7-dimethyl-8-ribityllumazine by condensation of 5-amino-6-(D-ribitylamino)uracil with 3,4-dihydroxy-2-butanone 4-phosphate. This is the penultimate step in the biosynthesis of riboflavin. The protein is 6,7-dimethyl-8-ribityllumazine synthase of Halobacterium salinarum (strain ATCC 29341 / DSM 671 / R1).